The sequence spans 61 residues: Large ribosomal subunit protein eL37 (61 aa).

Zn(2+) contacts are provided by cysteine 19, cysteine 22, cysteine 34, and cysteine 37. The segment at 19–37 (CRRCGRNAYNVSKHYCAAC) adopts a C4-type zinc-finger fold.

It belongs to the eukaryotic ribosomal protein eL37 family. Zn(2+) is required as a cofactor.

Its function is as follows. Binds to the 23S rRNA. The polypeptide is Large ribosomal subunit protein eL37 (Saccharolobus islandicus (strain Y.N.15.51 / Yellowstone #2) (Sulfolobus islandicus)).